We begin with the raw amino-acid sequence, 97 residues long: Putative septation protein SpoVG (97 aa).

It belongs to the SpoVG family.

Its function is as follows. Could be involved in septation. This is Putative septation protein SpoVG from Borrelia garinii subsp. bavariensis (strain ATCC BAA-2496 / DSM 23469 / PBi) (Borreliella bavariensis).